Consider the following 601-residue polypeptide: Aspartate--tRNA(Asp/Asn) ligase (601 aa).

Residue Glu177 participates in L-aspartate binding. The segment at 201 to 204 is aspartate; that stretch reads QLFK. L-aspartate is bound at residue Arg223. Residues 223–225 and Gln232 each bind ATP; that span reads RDE. L-aspartate is bound at residue His455. An ATP-binding site is contributed by Glu489. Residue Arg496 participates in L-aspartate binding. 541-544 is an ATP binding site; it reads GWDR. Residues 568 to 601 form a disordered region; that stretch reads VDPLTDAPAPIPLEQRRETGVDFKPKKKTDESAV. Residues 581 to 601 show a composition bias toward basic and acidic residues; sequence EQRRETGVDFKPKKKTDESAV.

It belongs to the class-II aminoacyl-tRNA synthetase family. Type 1 subfamily. Homodimer.

It is found in the cytoplasm. It carries out the reaction tRNA(Asx) + L-aspartate + ATP = L-aspartyl-tRNA(Asx) + AMP + diphosphate. Its function is as follows. Aspartyl-tRNA synthetase with relaxed tRNA specificity since it is able to aspartylate not only its cognate tRNA(Asp) but also tRNA(Asn). Reaction proceeds in two steps: L-aspartate is first activated by ATP to form Asp-AMP and then transferred to the acceptor end of tRNA(Asp/Asn). The protein is Aspartate--tRNA(Asp/Asn) ligase of Corynebacterium diphtheriae (strain ATCC 700971 / NCTC 13129 / Biotype gravis).